The primary structure comprises 380 residues: GATOR1 complex protein NPRL2 (380 aa).

Residues 1 to 133 (MGSSCRIECI…SKQKLVPIMT (133 aa)) form an interaction with PDPK1 region. Residue Arg-78 coordinates GDP. At Arg-78 the chain carries Asymmetric dimethylarginine. Residues Lys-158 and Lys-357 each participate in a glycyl lysine isopeptide (Lys-Gly) (interchain with G-Cter in ubiquitin) cross-link.

The protein belongs to the NPR2 family. Within the GATOR complex, component of the GATOR1 subcomplex, made of DEPDC5, NPRL2 and NPRL3. GATOR1 mediates the strong interaction of the GATOR complex with small GTPases Rag (RagA/RRAGA, RagB/RRAGB, RagC/RRAGC and/or RagD/RRAGD) heterodimers. GATOR1 interacts with GPR155/LYCHOS; interaction takes place in presence of cholesterol and prevents interaction between GATOR1 and KICSTOR. Interacts with PDPK1. In the presence of abundant amino acids, ubiquitinated at Lys-158 and Lys-357 via 'Lys-6'-linked ubiquitination by the WDR24 component of the GATOR2 complex, thereby inhibiting the GATOR1 complex and promoting mTORC1 activation. Post-translationally, asymmetric dimethylation at Arg-78 by PRMT1 inhibits the GTPase activator activity of the GATOR1 complex and consequently inducing timely mTORC1 activation under methionine-sufficient conditions.

Its subcellular location is the lysosome membrane. Its function is as follows. Catalytic component of the GATOR1 complex, a multiprotein complex that functions as an inhibitor of the amino acid-sensing branch of the mTORC1 pathway. In response to amino acid depletion, the GATOR1 complex has GTPase activating protein (GAP) activity and strongly increases GTP hydrolysis by RagA/RRAGA (or RagB/RRAGB) within heterodimeric Rag complexes, thereby turning them into their inactive GDP-bound form, releasing mTORC1 from lysosomal surface and inhibiting mTORC1 signaling. In the presence of abundant amino acids, the GATOR1 complex is ubiquitinated and inhibited by GATOR2. Within the GATOR1 complex, NPRL2 constitutes the catalytic subunit that mediates the GTPase activator activity and under methionine-sufficient conditions, the GTPase activator activity is inhibited by PRMT1 through methylation and consequently inducing timely mTORC1 activation. Functionally, suppresses Src-dependent tyrosine phosphorylation and activation of PDPK1 and its downstream signaling. Down-regulates PDPK1 kinase activity by interfering with tyrosine phosphorylation at 'Tyr-9', 'Tyr-373' and 'Tyr-376' residues. May act as a tumor suppressor. Suppresses cell growth and enhances sensitivity to various anticancer drugs. The protein is GATOR1 complex protein NPRL2 of Mus musculus (Mouse).